The chain runs to 105 residues: NADH-quinone oxidoreductase subunit K (105 aa).

Transmembrane regions (helical) follow at residues 9-29 (PNYYLVLAAVLFTIGAAGVLV), 34-54 (IVLFMCVELMLNAANLTLVTF), and 65-85 (IIAFFVMVVAAAEVVVGLAII).

This sequence belongs to the complex I subunit 4L family. NDH-1 is composed of 14 different subunits. Subunits NuoA, H, J, K, L, M, N constitute the membrane sector of the complex.

The protein localises to the cell membrane. The catalysed reaction is a quinone + NADH + 5 H(+)(in) = a quinol + NAD(+) + 4 H(+)(out). NDH-1 shuttles electrons from NADH, via FMN and iron-sulfur (Fe-S) centers, to quinones in the respiratory chain. The immediate electron acceptor for the enzyme in this species is believed to be a menaquinone. Couples the redox reaction to proton translocation (for every two electrons transferred, four hydrogen ions are translocated across the cytoplasmic membrane), and thus conserves the redox energy in a proton gradient. In Salinispora arenicola (strain CNS-205), this protein is NADH-quinone oxidoreductase subunit K.